A 477-amino-acid polypeptide reads, in one-letter code: Bifunctional protein HldE (477 aa).

A ribokinase region spans residues 1–318 (MKVTLPEFER…ENAVRGRADT (318 aa)). Position 179 is an N6-acetyllysine (Lys179). Position 195–198 (195–198 (NLSE)) interacts with ATP. Asp264 is a catalytic residue. The tract at residues 344–477 (MTNGVFDILH…IKKIQQDKKG (134 aa)) is cytidylyltransferase.

In the N-terminal section; belongs to the carbohydrate kinase PfkB family. It in the C-terminal section; belongs to the cytidylyltransferase family. As to quaternary structure, homodimer.

The catalysed reaction is D-glycero-beta-D-manno-heptose 7-phosphate + ATP = D-glycero-beta-D-manno-heptose 1,7-bisphosphate + ADP + H(+). It catalyses the reaction D-glycero-beta-D-manno-heptose 1-phosphate + ATP + H(+) = ADP-D-glycero-beta-D-manno-heptose + diphosphate. Its pathway is nucleotide-sugar biosynthesis; ADP-L-glycero-beta-D-manno-heptose biosynthesis; ADP-L-glycero-beta-D-manno-heptose from D-glycero-beta-D-manno-heptose 7-phosphate: step 1/4. It participates in nucleotide-sugar biosynthesis; ADP-L-glycero-beta-D-manno-heptose biosynthesis; ADP-L-glycero-beta-D-manno-heptose from D-glycero-beta-D-manno-heptose 7-phosphate: step 3/4. In terms of biological role, catalyzes the phosphorylation of D-glycero-D-manno-heptose 7-phosphate at the C-1 position to selectively form D-glycero-beta-D-manno-heptose-1,7-bisphosphate. Its function is as follows. Catalyzes the ADP transfer from ATP to D-glycero-beta-D-manno-heptose 1-phosphate, yielding ADP-D-glycero-beta-D-manno-heptose. The sequence is that of Bifunctional protein HldE from Escherichia fergusonii (strain ATCC 35469 / DSM 13698 / CCUG 18766 / IAM 14443 / JCM 21226 / LMG 7866 / NBRC 102419 / NCTC 12128 / CDC 0568-73).